The sequence spans 243 residues: Zinc import ATP-binding protein ZnuC (243 aa).

In terms of domain architecture, ABC transporter spans 25–242 (LVVDSITLFY…AKFMSVFPEN (218 aa)). 57–64 (GPNGGGKT) contacts ATP.

The protein belongs to the ABC transporter superfamily. Zinc importer (TC 3.A.1.15.5) family. In terms of assembly, the complex is composed of two ATP-binding proteins (ZnuC), two transmembrane proteins (ZnuB) and a solute-binding protein (ZnuA).

It is found in the cell inner membrane. It carries out the reaction Zn(2+)(out) + ATP(in) + H2O(in) = Zn(2+)(in) + ADP(in) + phosphate(in) + H(+)(in). Part of the ABC transporter complex ZnuABC involved in zinc import. Responsible for energy coupling to the transport system. The protein is Zinc import ATP-binding protein ZnuC of Anaplasma phagocytophilum (strain HZ).